Consider the following 823-residue polypeptide: Dimethyl sulfoxide/trimethylamine N-oxide reductase (823 aa).

The segment at residues 1–42 (MTKFSGNELRAELYRRAFLSYSVAPGALGMFGRSLLAKGARA) is a signal peptide (tat-type signal). Residues 156–160 (YGWKS), tryptophan 158, serine 189, 232–233 (KT), 262–263 (ID), 283–285 (QTD), 364–365 (WS), arginine 368, asparagine 476, histidine 480, 500–501 (HD), arginine 523, aspartate 553, 685–686 (HP), 691–693 (HSQ), asparagine 779, and 796–797 (GQ) each bind Mo-bis(molybdopterin guanine dinucleotide).

As to quaternary structure, homodimer. Requires Mo-bis(molybdopterin guanine dinucleotide) as cofactor. Predicted to be exported by the Tat system. The position of the signal peptide cleavage has been experimentally proven.

It is found in the periplasm. The catalysed reaction is dimethyl sulfide + a menaquinone + H2O = dimethyl sulfoxide + a menaquinol. It carries out the reaction trimethylamine + 2 Fe(III)-[cytochrome c] + H2O = trimethylamine N-oxide + 2 Fe(II)-[cytochrome c] + 3 H(+). Catalyzes the reduction of dimethyl sulfoxide (DMSO) and trimethylamine N-oxide (TMAO) to dimethyl sulfide (DMS) and trimethylamine, respectively. The terminal DMSO reductase can also use various sulfoxides and N-oxide compounds as terminal electron acceptor in addition to DMSO and TMAO. This Rhodobacter capsulatus (Rhodopseudomonas capsulata) protein is Dimethyl sulfoxide/trimethylamine N-oxide reductase (dorA).